The primary structure comprises 296 residues: Polyadenylate-binding protein 2 (296 aa).

Residues 1 to 102 (MAAVSSAASL…EEEPGELTGD (102 aa)) are disordered. Composition is skewed to gly residues over residues 19–31 (LRGG…GGQD) and 71–82 (GRGGSGGGGAGG). Residues 84–97 (EELEDEELEEEEPG) show a composition bias toward acidic residues. Positions 107 to 141 (DPELEAIKARVREMEEEAEKLKELQNEVEKQMNMS) form a coiled coil. The segment at 146-296 (NAGPVIMSIE…ARVTSWYTPY (151 aa)) is necessary for homooligomerization. Residues 163–240 (RSIYVGNVDY…RQIKVVPKRT (78 aa)) form the RRM domain.

In terms of assembly, monomer and homooligomer. Binds RNA as a monomer and oligomerizes when bound to poly(A).

It is found in the nucleus. It localises to the cytoplasm. Functionally, involved in the 3'-end formation of mRNA precursors (pre-mRNA) by the addition of a poly(A) tail of 200-250 nt to the upstream cleavage product. Stimulates poly(A) polymerase (PAPOLA) conferring processivity on the poly(A) tail elongation reaction and also controls the poly(A) tail length. Increases the affinity of poly(A) polymerase for RNA. Binds to poly(A) and to poly(G) with high affinity. May protect the poly(A) tail from degradation. This chain is Polyadenylate-binding protein 2, found in Xenopus tropicalis (Western clawed frog).